The sequence spans 484 residues: Tyramine receptor 1 (484 aa).

Over 1–54 (MVRVELQAASLMNGSSAAEEPQDALVGGDACGGRRPPSVLGVRLAVPEWEVAVT) the chain is Extracellular. The N-linked (GlcNAc...) asparagine glycan is linked to Asn-13. Residues 55–77 (AVSLSLIILITIVGNVLVVLSVF) traverse the membrane as a helical segment. At 78–87 (TYKPLRIVQN) the chain is on the cytoplasmic side. The chain crosses the membrane as a helical span at residues 88-109 (FFIVSLAVADLTVAVLVMPFNV). The Extracellular portion of the chain corresponds to 110–126 (AYSLIQRWVFGIVVCKM). Cys-124 and Cys-203 are oxidised to a cystine. A helical transmembrane segment spans residues 127–147 (WLTCDVLCCTASILNLCAIAL). The Cytoplasmic segment spans residues 148–167 (DRYWAITDPINYAQKRTLRR). Residues 168 to 190 (VLAMIAGVWLLSGVISSPPLIGW) traverse the membrane as a helical segment. Topologically, residues 191-215 (NDWPMEFNDTTPCQLTEEQGYVIYS) are extracellular. A glycan (N-linked (GlcNAc...) asparagine) is linked at Asn-198. The helical transmembrane segment at 216–237 (SLGSFFIPLFIMTIVYVEIFIA) threads the bilayer. Residues 238–411 (TKRRLRERAK…LSKERRAART (174 aa)) lie on the Cytoplasmic side of the membrane. Positions 253–280 (SAMKQQMAAQAVPSSVPSHDQESVSSET) are enriched in polar residues. 2 disordered regions span residues 253–322 (SAMK…PAMV) and 358–383 (TTTA…PTPV). Basic residues predominate over residues 295-306 (EKRRKTKKKSKK). A compositionally biased stretch (polar residues) spans 361-378 (AVTDSPRSRTASQKGSTA). The chain crosses the membrane as a helical span at residues 412-433 (LGIIMGVFVVCWLPFFLMYVIV). Topologically, residues 434 to 448 (PFCNPSCKPSPKLVN) are extracellular. A helical transmembrane segment spans residues 449–470 (FITWLGYINSALNPIIYTIFNL). Over 471-484 (DFRRAFKKLLHFKT) the chain is Cytoplasmic.

This sequence belongs to the G-protein coupled receptor 1 family. Present mainly in the central nervous system, especially in the supra- and subesophageal, thoracic and abdominal ganglia. Not found in the distal part of optic lobes.

It localises to the cell membrane. Its function is as follows. G-protein coupled receptor for tyramine, a known neurotransmitter and neuromodulator and direct precursor of octopamine. The rank order of potency for agonists of this receptor is tyramine &gt; naphazoline &gt; tolazoline &gt; DL-octopamine &gt; dopamine &gt; epinephrine &gt; 5-hydroxytryptamine. For antagonists, the rank order is yohimbine &gt; chlorpromazine &gt; mianserin &gt; phentolamine &gt; metoclopramide. In Locusta migratoria (Migratory locust), this protein is Tyramine receptor 1 (GCR1).